The sequence spans 198 residues: Recombination protein RecR (198 aa).

The C4-type zinc finger occupies 57–72; sequence CSVCGNITDEDPCEIC. The Toprim domain maps to 80–175; sequence EMILVVEQPK…KVTRLAHGLA (96 aa).

Belongs to the RecR family.

In terms of biological role, may play a role in DNA repair. It seems to be involved in an RecBC-independent recombinational process of DNA repair. It may act with RecF and RecO. This chain is Recombination protein RecR, found in Latilactobacillus sakei subsp. sakei (strain 23K) (Lactobacillus sakei subsp. sakei).